We begin with the raw amino-acid sequence, 146 residues long: MTMRSLLRTPFLCGLLWAFCAPGARAEEPAASFSQPGSMGLDKNTVHDQEHIMEHLEGVINKPEAEMSPQELQLHYFKMHDYDGNNLLDGLELSTAITHVHKEEGSEQAPLMSEDELINIIDGVLRDDDKNNDGYIDYAEFAKSLQ.

The N-terminal stretch at 1–26 (MTMRSLLRTPFLCGLLWAFCAPGARA) is a signal peptide. In terms of domain architecture, EF-hand 1 spans 68–103 (SPQELQLHYFKMHDYDGNNLLDGLELSTAITHVHKE). Residues Asp81, Asp83, Asn85, and Glu92 each coordinate Ca(2+). Ser106 is modified (phosphoserine). One can recognise an EF-hand 2 domain in the interval 116–146 (ELINIIDGVLRDDDKNNDGYIDYAEFAKSLQ). Ca(2+)-binding residues include Asp129, Asn131, Asp133, Tyr135, and Glu140.

As to quaternary structure, interacts in a calcium-dependent manner with LMAN1.

The protein localises to the endoplasmic reticulum-Golgi intermediate compartment. It localises to the endoplasmic reticulum. Its subcellular location is the golgi apparatus. Its function is as follows. The MCFD2-LMAN1 complex forms a specific cargo receptor for the ER-to-Golgi transport of selected proteins. Plays a role in the secretion of coagulation factors. The sequence is that of Multiple coagulation factor deficiency protein 2 (MCFD2) from Homo sapiens (Human).